Consider the following 511-residue polypeptide: Zinc finger and BTB domain-containing protein 45 (511 aa).

The region spanning 33–96 (CDVTVRIREA…LYSGSLVVAQ (64 aa)) is the BTB domain. The span at 159-168 (ARPPGHPGAA) shows a compositional bias: low complexity. Disordered stretches follow at residues 159–241 (ARPP…PDCA) and 294–403 (EDGA…PPTY). Acidic residues predominate over residues 206 to 224 (RGDEDDEESDDETDGEDGE). Residues 339–360 (PGPPAPPPSAPSGPAPAPPPAF) show a composition bias toward pro residues. Low complexity predominate over residues 378 to 397 (PAPSAAPTTAPSGTPARTPG). C2H2-type zinc fingers lie at residues 403–425 (YECS…MFIH), 431–453 (HQCA…MVTH), 459–481 (FQCA…MRTH), and 486–508 (APCP…LAAH).

This sequence belongs to the krueppel C2H2-type zinc-finger protein family.

Its subcellular location is the nucleus. Its function is as follows. May be involved in transcriptional regulation. In the central nervous system, may play a role in glial cell differentiation. This is Zinc finger and BTB domain-containing protein 45 (ZBTB45) from Homo sapiens (Human).